Here is a 217-residue protein sequence, read N- to C-terminus: Large ribosomal subunit protein uL3 (217 aa).

The interval 137 to 160 (VSASHGSHRNHRKPGSIGASSTPS) is disordered.

It belongs to the universal ribosomal protein uL3 family. As to quaternary structure, part of the 50S ribosomal subunit. Forms a cluster with proteins L14 and L19.

Its function is as follows. One of the primary rRNA binding proteins, it binds directly near the 3'-end of the 23S rRNA, where it nucleates assembly of the 50S subunit. In Clavibacter michiganensis subsp. michiganensis (strain NCPPB 382), this protein is Large ribosomal subunit protein uL3.